We begin with the raw amino-acid sequence, 438 residues long: METIYALSTAAGRAGIAVLRLSGPHARAALRALTGRKAGAPREAMLCRFRDPETHAALDRGLAIFFPAPASFTGEDVVELHIHGGRAVIAAMLRALGQLPGLRAAQPGEFTRRAFENGKLDLTEVEGLADLIDAETEAQRAQALRQMEGALGQLYEAWRARLMRALAYAEAEIDFPDEEVPGDLIAKLGPDIEALETEIAAHLDDGRRGEQLRDGVEVAIVGPPNAGKSSLLNRLAGREAAIVSDEAGTTRDVLEVRLDIGGVPVTLADTAGLREAAGAIEQEGVRRALARAEAADLRIVMVAPGVSGIGNGFALARPDDLRVLNKVDLGAEVPDGVIGISALTGQGIDALEAALAARVGSAYEAREHPVITRARHREGLADCAASLARAEAALKAGRDAELVAEDLRLAARALGRITGRVDVEDLLDVIFRDFCIGK.

(6S)-5-formyl-5,6,7,8-tetrahydrofolate is bound by residues arginine 20, glutamate 79, and lysine 119. Positions 215 to 360 (GVEVAIVGPP…LEAALAARVG (146 aa)) constitute a TrmE-type G domain. GTP contacts are provided by residues 225–230 (NAGKSS), 244–250 (SDEAGTT), and 269–272 (DTAG). Serine 229 and threonine 250 together coordinate Mg(2+). Lysine 438 provides a ligand contact to (6S)-5-formyl-5,6,7,8-tetrahydrofolate.

It belongs to the TRAFAC class TrmE-Era-EngA-EngB-Septin-like GTPase superfamily. TrmE GTPase family. As to quaternary structure, homodimer. Heterotetramer of two MnmE and two MnmG subunits. K(+) serves as cofactor.

It localises to the cytoplasm. Exhibits a very high intrinsic GTPase hydrolysis rate. Involved in the addition of a carboxymethylaminomethyl (cmnm) group at the wobble position (U34) of certain tRNAs, forming tRNA-cmnm(5)s(2)U34. The sequence is that of tRNA modification GTPase MnmE from Parvibaculum lavamentivorans (strain DS-1 / DSM 13023 / NCIMB 13966).